The sequence spans 301 residues: Probable 5-dehydro-4-deoxyglucarate dehydratase (301 aa).

This sequence belongs to the DapA family.

It catalyses the reaction 5-dehydro-4-deoxy-D-glucarate + H(+) = 2,5-dioxopentanoate + CO2 + H2O. It functions in the pathway carbohydrate acid metabolism; D-glucarate degradation; 2,5-dioxopentanoate from D-glucarate: step 2/2. The chain is Probable 5-dehydro-4-deoxyglucarate dehydratase from Cereibacter sphaeroides (strain ATCC 17023 / DSM 158 / JCM 6121 / CCUG 31486 / LMG 2827 / NBRC 12203 / NCIMB 8253 / ATH 2.4.1.) (Rhodobacter sphaeroides).